Reading from the N-terminus, the 126-residue chain is uncharacterized protein (126 aa).

This is an uncharacterized protein from Bacillus subtilis (strain 168).